A 455-amino-acid chain; its full sequence is Glutamyl-tRNA reductase (455 aa).

Substrate is bound by residues 49 to 52 (TCNR), Ser109, 114 to 116 (ETQ), and Gln120. Cys50 acts as the Nucleophile in catalysis. NADP(+) is bound at residue 189–194 (GAGKMG).

This sequence belongs to the glutamyl-tRNA reductase family. As to quaternary structure, homodimer.

The catalysed reaction is (S)-4-amino-5-oxopentanoate + tRNA(Glu) + NADP(+) = L-glutamyl-tRNA(Glu) + NADPH + H(+). It participates in porphyrin-containing compound metabolism; protoporphyrin-IX biosynthesis; 5-aminolevulinate from L-glutamyl-tRNA(Glu): step 1/2. In terms of biological role, catalyzes the NADPH-dependent reduction of glutamyl-tRNA(Glu) to glutamate 1-semialdehyde (GSA). This is Glutamyl-tRNA reductase from Bacillus pumilus (strain SAFR-032).